The following is a 409-amino-acid chain: Tyrosine--tRNA ligase (409 aa).

Y39 lines the L-tyrosine pocket. The short motif at 44–53 (PTAASLHVGS) is the 'HIGH' region element. Residues Y176 and Q180 each contribute to the L-tyrosine site. Positions 236-240 (KMGKT) match the 'KMSKS' region motif. Residue K239 participates in ATP binding. The S4 RNA-binding domain occupies 346–408 (ISLVDALVGL…GKKAHGVIQA (63 aa)).

This sequence belongs to the class-I aminoacyl-tRNA synthetase family. TyrS type 1 subfamily. Homodimer.

The protein localises to the cytoplasm. It carries out the reaction tRNA(Tyr) + L-tyrosine + ATP = L-tyrosyl-tRNA(Tyr) + AMP + diphosphate + H(+). In terms of biological role, catalyzes the attachment of tyrosine to tRNA(Tyr) in a two-step reaction: tyrosine is first activated by ATP to form Tyr-AMP and then transferred to the acceptor end of tRNA(Tyr). The sequence is that of Tyrosine--tRNA ligase from Zymomonas mobilis subsp. mobilis (strain ATCC 31821 / ZM4 / CP4).